Consider the following 111-residue polypeptide: Integration host factor subunit alpha (111 aa).

This sequence belongs to the bacterial histone-like protein family. Heterodimer of an alpha and a beta chain.

This protein is one of the two subunits of integration host factor, a specific DNA-binding protein that functions in genetic recombination as well as in transcriptional and translational control. The sequence is that of Integration host factor subunit alpha from Chelativorans sp. (strain BNC1).